The following is a 496-amino-acid chain: Glycerol kinase (496 aa).

Residue T12 coordinates ADP. Positions 12, 13, and 14 each coordinate ATP. A sn-glycerol 3-phosphate-binding site is contributed by T12. R16 is a binding site for ADP. Sn-glycerol 3-phosphate is bound by residues R82, E83, and Y134. The glycerol site is built by R82, E83, and Y134. A Phosphohistidine; by HPr modification is found at H230. D244 contributes to the sn-glycerol 3-phosphate binding site. Glycerol is bound by residues D244 and Q245. 2 residues coordinate ADP: T266 and G309. The ATP site is built by T266, G309, Q313, and G410. Residues G410 and N414 each coordinate ADP.

The protein belongs to the FGGY kinase family. In terms of assembly, homotetramer and homodimer (in equilibrium). The phosphoenolpyruvate-dependent sugar phosphotransferase system (PTS), including enzyme I, and histidine-containing protein (HPr) are required for the phosphorylation, which leads to the activation of the enzyme.

It carries out the reaction glycerol + ATP = sn-glycerol 3-phosphate + ADP + H(+). It functions in the pathway polyol metabolism; glycerol degradation via glycerol kinase pathway; sn-glycerol 3-phosphate from glycerol: step 1/1. Its activity is regulated as follows. Activated by phosphorylation and inhibited by fructose 1,6-bisphosphate (FBP). Key enzyme in the regulation of glycerol uptake and metabolism. Catalyzes the phosphorylation of glycerol to yield sn-glycerol 3-phosphate. The protein is Glycerol kinase of Bacillus cereus (strain G9842).